A 116-amino-acid chain; its full sequence is MSNVRANRVGEQMKKELSDIFMRELKDPRIEFVTVTGVDVTGDLQQANVYITVLGDDEQKEATLAGLSKAKGFIRSEIGKRIRLRKTPELFFHFDESIEYGNRIEKLLQDINRDGE.

It belongs to the RbfA family. As to quaternary structure, monomer. Binds 30S ribosomal subunits, but not 50S ribosomal subunits or 70S ribosomes.

The protein localises to the cytoplasm. One of several proteins that assist in the late maturation steps of the functional core of the 30S ribosomal subunit. Associates with free 30S ribosomal subunits (but not with 30S subunits that are part of 70S ribosomes or polysomes). Required for efficient processing of 16S rRNA. May interact with the 5'-terminal helix region of 16S rRNA. This is Ribosome-binding factor A from Halalkalibacterium halodurans (strain ATCC BAA-125 / DSM 18197 / FERM 7344 / JCM 9153 / C-125) (Bacillus halodurans).